We begin with the raw amino-acid sequence, 222 residues long: uncharacterized protein (222 aa).

An HTH gntR-type domain is found at 8 to 77 (AKKNQIIYRY…NTPGYFVCKD (70 aa)).

This is an uncharacterized protein from Mycoplasma genitalium (strain ATCC 33530 / DSM 19775 / NCTC 10195 / G37) (Mycoplasmoides genitalium).